The sequence spans 394 residues: Cell division protein FtsZ (394 aa).

GTP-binding positions include 21-25, 108-110, glutamate 139, arginine 143, and aspartate 187; these read GGGGN and GTG.

Belongs to the FtsZ family. As to quaternary structure, homodimer. Polymerizes to form a dynamic ring structure in a strictly GTP-dependent manner. Interacts directly with several other division proteins.

The protein localises to the cytoplasm. Functionally, essential cell division protein that forms a contractile ring structure (Z ring) at the future cell division site. The regulation of the ring assembly controls the timing and the location of cell division. One of the functions of the FtsZ ring is to recruit other cell division proteins to the septum to produce a new cell wall between the dividing cells. Binds GTP and shows GTPase activity. This Azotobacter vinelandii protein is Cell division protein FtsZ.